Reading from the N-terminus, the 614-residue chain is Threonine--tRNA ligase (614 aa).

Positions 1–138 (MRTLMIHSDY…HPLSELSRTI (138 aa)) are editing domain. The tract at residues 133-157 (ELSRTITTEPEEESEDSEEEPSEPS) is disordered. Over residues 141–154 (EPEEESEDSEEEPS) the composition is skewed to acidic residues. The tract at residues 200 to 495 (PHVRLMREKE…TDKGNKPSLP (296 aa)) is catalytic. Residues C292, H344, and H466 each contribute to the Zn(2+) site.

It belongs to the class-II aminoacyl-tRNA synthetase family. As to quaternary structure, homodimer. Requires Zn(2+) as cofactor.

Its subcellular location is the cytoplasm. The catalysed reaction is tRNA(Thr) + L-threonine + ATP = L-threonyl-tRNA(Thr) + AMP + diphosphate + H(+). Functionally, catalyzes the attachment of threonine to tRNA(Thr) in a two-step reaction: L-threonine is first activated by ATP to form Thr-AMP and then transferred to the acceptor end of tRNA(Thr). Also edits incorrectly charged L-seryl-tRNA(Thr). The chain is Threonine--tRNA ligase from Methanosphaera stadtmanae (strain ATCC 43021 / DSM 3091 / JCM 11832 / MCB-3).